We begin with the raw amino-acid sequence, 469 residues long: Glutamate--tRNA ligase 1 (469 aa).

The 'HIGH' region signature appears at 8 to 18 (PSPTGYLHIGG). The segment at 117–137 (TPRYDGTWRPEPGKELPPVPA) is disordered. Positions 240-244 (KLSKR) match the 'KMSKS' region motif. Lys-243 lines the ATP pocket.

This sequence belongs to the class-I aminoacyl-tRNA synthetase family. Glutamate--tRNA ligase type 1 subfamily. Monomer.

The protein resides in the cytoplasm. The enzyme catalyses tRNA(Glu) + L-glutamate + ATP = L-glutamyl-tRNA(Glu) + AMP + diphosphate. Its function is as follows. Catalyzes the attachment of glutamate to tRNA(Glu) in a two-step reaction: glutamate is first activated by ATP to form Glu-AMP and then transferred to the acceptor end of tRNA(Glu). The chain is Glutamate--tRNA ligase 1 from Aliarcobacter butzleri (strain RM4018) (Arcobacter butzleri).